A 190-amino-acid polypeptide reads, in one-letter code: Ribosome-recycling factor (190 aa).

Belongs to the RRF family.

It is found in the cytoplasm. Responsible for the release of ribosomes from messenger RNA at the termination of protein biosynthesis. May increase the efficiency of translation by recycling ribosomes from one round of translation to another. The sequence is that of Ribosome-recycling factor from Fusobacterium nucleatum subsp. nucleatum (strain ATCC 25586 / DSM 15643 / BCRC 10681 / CIP 101130 / JCM 8532 / KCTC 2640 / LMG 13131 / VPI 4355).